The primary structure comprises 156 residues: Small ribosomal subunit protein uS7 (156 aa).

Belongs to the universal ribosomal protein uS7 family. Part of the 30S ribosomal subunit. Contacts proteins S9 and S11.

Its function is as follows. One of the primary rRNA binding proteins, it binds directly to 16S rRNA where it nucleates assembly of the head domain of the 30S subunit. Is located at the subunit interface close to the decoding center, probably blocks exit of the E-site tRNA. The protein is Small ribosomal subunit protein uS7 of Clostridium tetani (strain Massachusetts / E88).